Here is a 1125-residue protein sequence, read N- to C-terminus: Transcription-repair-coupling factor (1125 aa).

The region spanning 597–758 is the Helicase ATP-binding domain; the sequence is DMMSFKVMDR…LIKLRDISVL (162 aa). 610-617 serves as a coordination point for ATP; it reads GDVGFGKT. The DEEQ box signature appears at 711–714; that stretch reads DEEQ. The Helicase C-terminal domain maps to 774 to 933; the sequence is SFSELLIKHA…GFKIAMKDME (160 aa).

In the N-terminal section; belongs to the UvrB family. This sequence in the C-terminal section; belongs to the helicase family. RecG subfamily.

The protein localises to the cytoplasm. In terms of biological role, couples transcription and DNA repair by recognizing RNA polymerase (RNAP) stalled at DNA lesions. Mediates ATP-dependent release of RNAP and its truncated transcript from the DNA, and recruitment of nucleotide excision repair machinery to the damaged site. The polypeptide is Transcription-repair-coupling factor (Borreliella burgdorferi (strain ATCC 35210 / DSM 4680 / CIP 102532 / B31) (Borrelia burgdorferi)).